The following is a 736-amino-acid chain: Myosin-7 (736 aa).

One can recognise a Myosin motor domain in the interval 1-342 (NWMVTRINAT…LLGLLEEMRD (342 aa)). The actin-binding stretch occupies residues 219-241 (LNKLMTNLRSTHPHFVRCIIPNE). One can recognise an IQ domain in the interval 345 to 374 (LSRIITRIQAQSRGVLSRMEYKKLLERRDS). Residues 403–736 (LLKSAETEKE…MNKKREAEFQ (334 aa)) adopt a coiled-coil conformation. A Phosphoserine modification is found at S701. The interval 716 to 736 (EAGGATSVQIEMNKKREAEFQ) is disordered. Residues 727 to 736 (MNKKREAEFQ) are compositionally biased toward basic and acidic residues.

It belongs to the TRAFAC class myosin-kinesin ATPase superfamily. Myosin family. Muscle myosin is a hexameric protein that consists of 2 heavy chain subunits (MHC), 2 alkali light chain subunits (MLC) and 2 regulatory light chain subunits (MLC-2). Interacts with ECPAS. Interacts (via C-terminus) with LRRC39.

The protein localises to the cytoplasm. It is found in the myofibril. It localises to the sarcomere. Myosins are actin-based motor molecules with ATPase activity essential for muscle contraction. Forms regular bipolar thick filaments that, together with actin thin filaments, constitute the fundamental contractile unit of skeletal and cardiac muscle. In Oryctolagus cuniculus (Rabbit), this protein is Myosin-7 (MYH7).